A 124-amino-acid polypeptide reads, in one-letter code: Small ribosomal subunit protein bS6 (124 aa).

Residues 99 to 124 (PLPAPRIVPGSEPEPVQQQEAAAVEA) are disordered. Over residues 111–124 (PEPVQQQEAAAVEA) the composition is skewed to low complexity.

It belongs to the bacterial ribosomal protein bS6 family.

Functionally, binds together with bS18 to 16S ribosomal RNA. The sequence is that of Small ribosomal subunit protein bS6 from Prochlorococcus marinus (strain MIT 9313).